We begin with the raw amino-acid sequence, 226 residues long: MADVLNALEEKVVELQQSESVEVIKRHFREFRKIWETARVELEYSSIQLDSVLRYEKAVQEYIRLNRRYRNKIASGEPWLPIAQEIGKIVDEEEITSPSDGSLQKRSMDNSGSWQSDDIYLTSASQVTAAMRDIHAQMVQAVDMSAENAMELSSSTNLLETLQEKYFGVEDVLYTSKRIIKSLKLSDRSDYFLVVSGFGFFIFVVVYLLFKRIVWPILSMFLWFLR.

Over 1–189 the chain is Cytoplasmic; it reads MADVLNALEE…IKSLKLSDRS (189 aa). Positions 53–75 form a coiled coil; the sequence is LRYEKAVQEYIRLNRRYRNKIAS. A Phosphoserine modification is found at serine 97. Residues 190–210 form a helical; Anchor for type IV membrane protein membrane-spanning segment; that stretch reads DYFLVVSGFGFFIFVVVYLLF. Residues 211-226 are Lumenal-facing; sequence KRIVWPILSMFLWFLR.

The protein belongs to the SEC20 family. As to quaternary structure, component of a SNARE complex consisting of ufe1, sec20, sec22 and use1. Interacts with tip20 through its cytoplasmic domain.

The protein resides in the endoplasmic reticulum membrane. Functionally, SNARE required for targeting and fusion of Golgi-derived retrograde transport vesicles with the ER. The sequence is that of Protein transport protein sec20 from Schizosaccharomyces pombe (strain 972 / ATCC 24843) (Fission yeast).